Here is a 208-residue protein sequence, read N- to C-terminus: Interleukin-6 (208 aa).

The first 29 residues, 1–29 (MNSRFTSAFTPFAVSLGLLLVMTSAFPTP), serve as a signal peptide directing secretion. Residue N38 is glycosylated (N-linked (GlcNAc...) asparagine). C72 and C78 are joined by a disulfide. Phosphoserine is present on S81. Cysteines 101 and 111 form a disulfide.

Belongs to the IL-6 superfamily. In terms of assembly, component of a hexamer of two molecules each of IL6, IL6R and IL6ST; first binds to IL6R to associate with the signaling subunit IL6ST. Interacts with IL6R (via the N-terminal ectodomain); this interaction may be affected by IL6R-binding with SORL1, hence decreasing IL6 cis signaling. Interacts with SORL1 (via the N-terminal ectodomain); this interaction leads to IL6 internalization and lysosomal degradation. May form a trimeric complex with the soluble SORL1 ectodomain and soluble IL6R receptor; this interaction might stabilize circulating IL6, hence promoting IL6 trans signaling.

It is found in the secreted. In terms of biological role, cytokine with a wide variety of biological functions in immunity, tissue regeneration, and metabolism. Binds to IL6R, then the complex associates to the signaling subunit IL6ST/gp130 to trigger the intracellular IL6-signaling pathway. The interaction with the membrane-bound IL6R and IL6ST stimulates 'classic signaling', whereas the binding of IL6 and soluble IL6R to IL6ST stimulates 'trans-signaling'. Alternatively, 'cluster signaling' occurs when membrane-bound IL6:IL6R complexes on transmitter cells activate IL6ST receptors on neighboring receiver cells. Its function is as follows. IL6 is a potent inducer of the acute phase response. Rapid production of IL6 contributes to host defense during infection and tissue injury, but excessive IL6 synthesis is involved in disease pathology. In the innate immune response, is synthesized by myeloid cells, such as macrophages and dendritic cells, upon recognition of pathogens through toll-like receptors (TLRs) at the site of infection or tissue injury. In the adaptive immune response, is required for the differentiation of B cells into immunoglobulin-secreting cells. Plays a major role in the differentiation of CD4(+) T cell subsets. Essential factor for the development of T follicular helper (Tfh) cells that are required for the induction of germinal-center formation. Required to drive naive CD4(+) T cells to the Th17 lineage. Also required for proliferation of myeloma cells and the survival of plasmablast cells. Acts as an essential factor in bone homeostasis and on vessels directly or indirectly by induction of VEGF, resulting in increased angiogenesis activity and vascular permeability. Induces, through 'trans-signaling' and synergistically with IL1B and TNF, the production of VEGF. Involved in metabolic controls, is discharged into the bloodstream after muscle contraction increasing lipolysis and improving insulin resistance. 'Trans-signaling' in central nervous system also regulates energy and glucose homeostasis. Mediates, through GLP-1, crosstalk between insulin-sensitive tissues, intestinal L cells and pancreatic islets to adapt to changes in insulin demand. Also acts as a myokine. Plays a protective role during liver injury, being required for maintenance of tissue regeneration. Also has a pivotal role in iron metabolism by regulating HAMP/hepcidin expression upon inflammation or bacterial infection. Through activation of IL6ST-YAP-NOTCH pathway, induces inflammation-induced epithelial regeneration. The protein is Interleukin-6 (IL6) of Bubalus bubalis (Domestic water buffalo).